The primary structure comprises 402 residues: LIM homeobox transcription factor 1-beta (402 aa).

2 LIM zinc-binding domains span residues 56 to 106 (CEGC…CKQD) and 115 to 168 (CSGC…CKGD). 2 disordered regions span residues 176–229 (LSSV…LTTQ) and 326–346 (PYGS…PGDH). Residues 219–278 (PKRPRTILTTQQRRAFKASFEVSSKPCRKVRETLAAETGLSVRVVQVWFQNQRAKMKKLA) constitute a DNA-binding region (homeobox). Residues 326–338 (PYGSSDPFQQGLT) show a composition bias toward polar residues.

Interacts with DHX9. Expressed in most tissues. Highest levels in testis, thyroid, duodenum, skeletal muscle, and pancreatic islets.

Its subcellular location is the nucleus. Its function is as follows. Transcription factor involved in the regulation of podocyte-expressed genes. Essential for the specification of dorsal limb fate at both the zeugopodal and autopodal levels. The polypeptide is LIM homeobox transcription factor 1-beta (LMX1B) (Homo sapiens (Human)).